The chain runs to 506 residues: Cysteine--tRNA ligase (506 aa).

Zn(2+) is bound at residue C34. The short motif at 36–46 (PTVYDFAHIGN) is the 'HIGH' region element. C230, H269, and E273 together coordinate Zn(2+). The 'KMSKS' region motif lies at 302–306 (KMSKS). K305 is a binding site for ATP.

The protein belongs to the class-I aminoacyl-tRNA synthetase family. As to quaternary structure, monomer. Requires Zn(2+) as cofactor.

Its subcellular location is the cytoplasm. It carries out the reaction tRNA(Cys) + L-cysteine + ATP = L-cysteinyl-tRNA(Cys) + AMP + diphosphate. The chain is Cysteine--tRNA ligase from Brucella suis biovar 1 (strain 1330).